Reading from the N-terminus, the 175-residue chain is 6,7-dimethyl-8-ribityllumazine synthase (175 aa).

5-amino-6-(D-ribitylamino)uracil contacts are provided by residues Phe-24, Ala-58–Glu-60, and Ala-82–Ile-84. Glu-87–Thr-88 serves as a coordination point for (2S)-2-hydroxy-3-oxobutyl phosphate. The active-site Proton donor is His-90. Residue Asn-115 participates in 5-amino-6-(D-ribitylamino)uracil binding. Position 129 (Arg-129) interacts with (2S)-2-hydroxy-3-oxobutyl phosphate. Positions Leu-151–Arg-175 are disordered. Acidic residues predominate over residues Glu-152–Arg-175.

Belongs to the DMRL synthase family.

The enzyme catalyses (2S)-2-hydroxy-3-oxobutyl phosphate + 5-amino-6-(D-ribitylamino)uracil = 6,7-dimethyl-8-(1-D-ribityl)lumazine + phosphate + 2 H2O + H(+). It functions in the pathway cofactor biosynthesis; riboflavin biosynthesis; riboflavin from 2-hydroxy-3-oxobutyl phosphate and 5-amino-6-(D-ribitylamino)uracil: step 1/2. Catalyzes the formation of 6,7-dimethyl-8-ribityllumazine by condensation of 5-amino-6-(D-ribitylamino)uracil with 3,4-dihydroxy-2-butanone 4-phosphate. This is the penultimate step in the biosynthesis of riboflavin. The chain is 6,7-dimethyl-8-ribityllumazine synthase from Bordetella petrii (strain ATCC BAA-461 / DSM 12804 / CCUG 43448).